The primary structure comprises 308 residues: Elongation factor Ts (308 aa).

Positions 80 to 83 (TDFV) are involved in Mg(2+) ion dislocation from EF-Tu.

Belongs to the EF-Ts family.

The protein localises to the cytoplasm. In terms of biological role, associates with the EF-Tu.GDP complex and induces the exchange of GDP to GTP. It remains bound to the aminoacyl-tRNA.EF-Tu.GTP complex up to the GTP hydrolysis stage on the ribosome. The polypeptide is Elongation factor Ts (Rhizobium johnstonii (strain DSM 114642 / LMG 32736 / 3841) (Rhizobium leguminosarum bv. viciae)).